The sequence spans 187 residues: Large ribosomal subunit protein eL18B (187 aa).

A Phosphothreonine modification is found at threonine 134. At serine 136 the chain carries Phosphoserine.

This sequence belongs to the eukaryotic ribosomal protein eL18 family. In terms of assembly, component of the large ribosomal subunit (LSU). Mature yeast ribosomes consist of a small (40S) and a large (60S) subunit. The 40S small subunit contains 1 molecule of ribosomal RNA (18S rRNA) and at least 33 different proteins. The large 60S subunit contains 3 rRNA molecules (25S, 5.8S and 5S rRNA) and at least 46 different proteins. eL18 interacts with NAP1.

Its subcellular location is the cytoplasm. Functionally, component of the ribosome, a large ribonucleoprotein complex responsible for the synthesis of proteins in the cell. The small ribosomal subunit (SSU) binds messenger RNAs (mRNAs) and translates the encoded message by selecting cognate aminoacyl-transfer RNA (tRNA) molecules. The large subunit (LSU) contains the ribosomal catalytic site termed the peptidyl transferase center (PTC), which catalyzes the formation of peptide bonds, thereby polymerizing the amino acids delivered by tRNAs into a polypeptide chain. The nascent polypeptides leave the ribosome through a tunnel in the LSU and interact with protein factors that function in enzymatic processing, targeting, and the membrane insertion of nascent chains at the exit of the ribosomal tunnel. This chain is Large ribosomal subunit protein eL18B (rpl1802), found in Schizosaccharomyces pombe (strain 972 / ATCC 24843) (Fission yeast).